Consider the following 351-residue polypeptide: MNKVGILLILFILSLILPFTALYLAGDTHLITVKDIINFLLKGTTGNEFKDIIIKDVRLPPIIGAVLIGLTISVAGLMLQTLFRNLLASPYTTGISSGVLMVVALVIFIDSLSHLFEIFGEKSILVAGWCGGIFSMILLIIIALRVREANGVIIVALLLSYFFMGLRAYLIANAEELKIQEYWGFTIGSLSKITLGDVIPMTICSIIFIIGVMFLIKSLNALLFGEQYAKSFGLDIKKTRLLVLFFASFITGAIIPYVGLIAFIGIIAPYLARPLIKTSDHRYLVPATMFLGVILMVSCHILSLKYYLPIHYLYGINRPASPLPIGAVLDILGGMLVVYLVYKGEKKIKID.

A run of 9 helical transmembrane segments spans residues 4–24 (VGIL…ALYL), 59–79 (LPPI…GLML), 99–119 (VLMV…FEIF), 124–144 (ILVA…IIAL), 152–172 (VIIV…YLIA), 196–216 (GDVI…MFLI), 249–269 (FITG…IIAP), 284–304 (LVPA…ILSL), and 322–342 (PLPI…YLVY).

Belongs to the binding-protein-dependent transport system permease family. FecCD subfamily.

It localises to the cell membrane. Functionally, probably part of a binding-protein-dependent transport system. Probably responsible for the translocation of the substrate across the membrane. The sequence is that of Putative ABC transporter permease protein MJ0876 from Methanocaldococcus jannaschii (strain ATCC 43067 / DSM 2661 / JAL-1 / JCM 10045 / NBRC 100440) (Methanococcus jannaschii).